A 244-amino-acid polypeptide reads, in one-letter code: MTNTDNMSPNFLRNAFRRLTITAIAPIVMTFEPFFIFPVVLITLARRGFVYILLPITAALILRATKVNYGPLTVSPTMHFNTPSIAVFAVLLVATTIASVFKPKLWRAFLVAIVVISILHAATPIESPVKGEGCNKISIELLDSETNFCFYISSAKTGKMWYYHATLHFMDSEGLVVNRVHLLTAALTFSSEVVEFRNEQGKFHAIFYSEVPIDSLKLKLCYFPETVIGSLPVVFCSSVDLEVR.

4 helical membrane passes run Thr20 to Ile42, Phe49 to Val67, Thr82 to Phe101, and Ala108 to Ile125.

The protein localises to the cell membrane. This is an uncharacterized protein from Archaeoglobus fulgidus (strain ATCC 49558 / DSM 4304 / JCM 9628 / NBRC 100126 / VC-16).